The chain runs to 304 residues: E3 ubiquitin-protein ligase RNF144B (304 aa).

Residues 27–245 (PLVTCKLCLC…YDRGPCRNKL (219 aa)) are TRIAD supradomain. Zn(2+) contacts are provided by cysteine 31, cysteine 34, cysteine 54, cysteine 57, cysteine 122, cysteine 127, cysteine 146, cysteine 149, cysteine 154, cysteine 157, histidine 162, cysteine 167, cysteine 194, and cysteine 197. The segment at 31–81 (CKLCLCEQSLDKMTTLQECRCIFCTACLKQYMQLAIREGCGSPITCPDMVC) adopts an RING-type 1 zinc-finger fold. The IBR-type zinc-finger motif lies at 102–167 (QLYQRLKFER…KDAWHAEVSC (66 aa)). The RING-type 2; atypical zinc finger occupies 194–223 (CPVCRVYIERNEGCAQMMCKNCKHTFCWYC). The active site involves cysteine 207. Zn(2+) contacts are provided by cysteine 212, cysteine 215, cysteine 220, cysteine 223, histidine 235, and cysteine 241. Residues 259–279 (VVGILVGLGIIALVTSPLLLL) traverse the membrane as a helical segment.

The protein belongs to the RBR family. RNF144 subfamily. In terms of assembly, interacts with UBE2L3, UBE2L6 and LCMT2, as well as with BAX. Interacts with TBK1; this interaction inhibits TBK1 phosphorylation and 'Lys-63'-linked polyubiquitination. Post-translationally, auto-ubiquitinated.

It is found in the mitochondrion membrane. Its subcellular location is the cytoplasm. It carries out the reaction [E2 ubiquitin-conjugating enzyme]-S-ubiquitinyl-L-cysteine + [acceptor protein]-L-lysine = [E2 ubiquitin-conjugating enzyme]-L-cysteine + [acceptor protein]-N(6)-ubiquitinyl-L-lysine.. It participates in protein modification; protein ubiquitination. Functionally, E3 ubiquitin-protein ligase which accepts ubiquitin from E2 ubiquitin-conjugating enzymes UBE2L3 and UBE2L6 in the form of a thioester and then directly transfers the ubiquitin to targeted substrates such as LCMT2, thereby promoting their degradation. Induces apoptosis via a p53/TP53-dependent but caspase-independent mechanism. Plays a crucial role in maintaining the genomic stability by controlling the degradation of multiple proteins involved in mitotic progression and DNA damage. Regulates epithelial homeostasis by mediating degradation of CDKN1A and isoform 2 of TP63. Plays a regulatory role in innate immunity by negatively regulating IRF3 activation and IFN-beta production. Mechanistically, inhibits TBK1 phosphorylation and 'Lys-63'-linked polyubiquitination independently of its E3 ligase activity. Alternatively, promotes 'Lys-27' and 'Lys-33'-linked ubiquitination of IFIH1/MDA5, promoting selective autophagic degradation of IFIH1/MDA5 to inhibit antiviral response. This chain is E3 ubiquitin-protein ligase RNF144B (RNF144B), found in Bos taurus (Bovine).